A 535-amino-acid polypeptide reads, in one-letter code: Inositol 1,4,5-trisphosphate receptor-interacting protein-like 2 (535 aa).

Positions 1 to 32 (MSVRYTLNLRVFWPLVTGLCTALVCLYHALRS) are cleaved as a signal peptide. The Extracellular segment spans residues 33 to 43 (SEDARAESPDG). The chain crosses the membrane as a helical span at residues 44 to 64 (ADSGFPLLKVAILLLLGYILL). The Cytoplasmic portion of the chain corresponds to 65–535 (RCRHAIRQRL…RIQGSPEDEP (471 aa)). The residue at position 139 (serine 139) is a Phosphoserine.

This sequence belongs to the ITPRIP family.

Its subcellular location is the membrane. This chain is Inositol 1,4,5-trisphosphate receptor-interacting protein-like 2 (Itpripl2), found in Mus musculus (Mouse).